Consider the following 350-residue polypeptide: 4-hydroxy-2-oxovalerate aldolase 3 (350 aa).

Residues 13–265 (VVFHDMCLRD…DTGVDLFRLM (253 aa)) enclose the Pyruvate carboxyltransferase domain. 21-22 (RD) lines the substrate pocket. Mn(2+) is bound at residue Asp22. His25 acts as the Proton acceptor in catalysis. Ser175 and His204 together coordinate substrate. Positions 204 and 206 each coordinate Mn(2+). Tyr295 contacts substrate.

Belongs to the 4-hydroxy-2-oxovalerate aldolase family.

The enzyme catalyses (S)-4-hydroxy-2-oxopentanoate = acetaldehyde + pyruvate. The sequence is that of 4-hydroxy-2-oxovalerate aldolase 3 (lapG) from Azotobacter vinelandii (strain DJ / ATCC BAA-1303).